Here is a 106-residue protein sequence, read N- to C-terminus: Nucleoid-associated protein MCCL_1934 (106 aa).

Residues 1–34 (MRGGGNMQQMMKQMQKMQKKMAEEQEKLKEERIE) are disordered. The span at 7–16 (MQQMMKQMQK) shows a compositional bias: low complexity. Residues 20-34 (KMAEEQEKLKEERIE) show a composition bias toward basic and acidic residues.

This sequence belongs to the YbaB/EbfC family. As to quaternary structure, homodimer.

It localises to the cytoplasm. Its subcellular location is the nucleoid. Functionally, binds to DNA and alters its conformation. May be involved in regulation of gene expression, nucleoid organization and DNA protection. This chain is Nucleoid-associated protein MCCL_1934, found in Macrococcus caseolyticus (strain JCSC5402) (Macrococcoides caseolyticum).